Consider the following 158-residue polypeptide: uncharacterized protein (158 aa).

The FPG-type zinc-finger motif lies at 109–143 (RVHARTGLPCPVCGDTVREVSFADKSFQYCPTCQT).

This is an uncharacterized protein from Mycobacterium tuberculosis (strain ATCC 25618 / H37Rv).